We begin with the raw amino-acid sequence, 157 residues long: uncharacterized protein (157 aa).

Residues 1-157 (MNRGPPLRSR…SFSFLVPSNS (157 aa)) form a disordered region. Over residues 8 to 31 (RSRPPSSPPPASAFPGPSPFPSPS) the composition is skewed to pro residues. The segment covering 62–71 (RTSHPPRCPH) has biased composition (basic residues). Residues 76 to 95 (PSAPSPPFTPPHPLPTPTPS) are compositionally biased toward pro residues. Low complexity-rich tracts occupy residues 96–117 (SSPR…SLAS) and 124–157 (SFSS…PSNS).

This is an uncharacterized protein from Vitis vinifera (Grape).